We begin with the raw amino-acid sequence, 267 residues long: MRKKTSSNKKKQTKKTNNISLRRKLGLMYKKAILGLKIALIIFVCLFVFTKYFAGIKTYLTTNIYQTTTKLGFKLENVIIEGQQNVDEPTILKVLNANKGSPIFALKLDEIRNNLKKNKWIKEVYVSRRLPNTVYIKLFEREPIAIWQINNQLFLVDEEGYEISKNIQPFPHLLHVVGEGANIYAGTLVLELQKYPALMNKTSAAVRLGDRRWDLNLKGNISIKLPEKEFEEALKYVDALNKANKLFNQNYKVLDLRDKNKYYIEKY.

Residues 1–32 (MRKKTSSNKKKQTKKTNNISLRRKLGLMYKKA) are Cytoplasmic-facing. Residues 33-53 (ILGLKIALIIFVCLFVFTKYF) traverse the membrane as a helical segment. Residues 54–267 (AGIKTYLTTN…DKNKYYIEKY (214 aa)) are Periplasmic-facing. The POTRA domain occupies 73 to 141 (FKLENVIIEG…NTVYIKLFER (69 aa)).

This sequence belongs to the FtsQ/DivIB family. FtsQ subfamily.

It is found in the cell inner membrane. In terms of biological role, essential cell division protein. This Rickettsia conorii (strain ATCC VR-613 / Malish 7) protein is Cell division protein FtsQ.